The chain runs to 451 residues: Probable carboxypeptidase PMAA_093910 (451 aa).

Residues Met-1–Ala-19 form the signal peptide. A glycan (N-linked (GlcNAc...) asparagine) is linked at Asn-149. Zn(2+) is bound at residue Asp-171. Glu-203 acts as the Proton acceptor in catalysis. Glu-204 lines the Zn(2+) pocket. Residue Asn-354 is glycosylated (N-linked (GlcNAc...) asparagine).

The protein belongs to the peptidase M20A family. Zn(2+) is required as a cofactor.

It localises to the secreted. In Talaromyces marneffei (strain ATCC 18224 / CBS 334.59 / QM 7333) (Penicillium marneffei), this protein is Probable carboxypeptidase PMAA_093910.